Here is a 290-residue protein sequence, read N- to C-terminus: Homeobox protein HMX3-B (290 aa).

Disordered stretches follow at residues 1–41 (MADS…GSSK) and 96–169 (EKVN…KKKT). Residues 107–124 (LDRHTPDPPKSDQESKEE) show a composition bias toward basic and acidic residues. The segment covering 125-137 (SADDEIALEESDA) has biased composition (acidic residues). Residues 138-162 (EEPKKETDQEDDWMRKGEDLESDKK) show a composition bias toward basic and acidic residues. A DNA-binding region (homeobox) is located at residues 166–225 (KKKTRTVFSRSQVFQLESTFDIKRYLSSSERAGLAASLHLTETQVKIWFQNRRNKWKRQL).

Belongs to the HMX homeobox family. Expressed in the ear placode and vesicle and in cells forming the vestibulo-acoustic ganglion.

It localises to the nucleus. Its function is as follows. Transcription factor involved in specification of neuronal cell types and which is required for inner ear and hypothalamus development. Binds to the 5'-CAAGTG-3' core sequence. The chain is Homeobox protein HMX3-B (hmx3b) from Oryzias latipes (Japanese rice fish).